Reading from the N-terminus, the 157-residue chain is Arginine repressor (157 aa).

It belongs to the ArgR family.

Its subcellular location is the cytoplasm. The protein operates within amino-acid biosynthesis; L-arginine biosynthesis [regulation]. Its function is as follows. Regulates arginine biosynthesis genes. This chain is Arginine repressor, found in Bacteroides fragilis (strain YCH46).